The following is a 238-amino-acid chain: Ribosomal RNA small subunit methyltransferase G (238 aa).

S-adenosyl-L-methionine is bound by residues glycine 77, phenylalanine 82, 128–129 (AE), and arginine 147.

Belongs to the methyltransferase superfamily. RNA methyltransferase RsmG family.

The protein localises to the cytoplasm. Specifically methylates the N7 position of guanine in position 535 of 16S rRNA. The sequence is that of Ribosomal RNA small subunit methyltransferase G from Lysinibacillus sphaericus (strain C3-41).